A 1072-amino-acid polypeptide reads, in one-letter code: DNA-directed RNA polymerase subunit beta (1072 aa).

The protein belongs to the RNA polymerase beta chain family. In plastids the minimal PEP RNA polymerase catalytic core is composed of four subunits: alpha, beta, beta', and beta''. When a (nuclear-encoded) sigma factor is associated with the core the holoenzyme is formed, which can initiate transcription.

The protein resides in the plastid. It localises to the chloroplast. It carries out the reaction RNA(n) + a ribonucleoside 5'-triphosphate = RNA(n+1) + diphosphate. Functionally, DNA-dependent RNA polymerase catalyzes the transcription of DNA into RNA using the four ribonucleoside triphosphates as substrates. This Cycas taitungensis (Prince sago) protein is DNA-directed RNA polymerase subunit beta.